We begin with the raw amino-acid sequence, 116 residues long: MAPSTAMLIMGLLKLPRLRLATHFLPCGRLTFVQCSTMNSRPLRTLLASPDPSLPKTLTSTRLTLFAAPYVLEPTSPATCVPWPFWSPNPSLVKSIPWMTLSSNSGWSAKIPVSMI.

A signal peptide spans 1–21; the sequence is MAPSTAMLIMGLLKLPRLRLA.

This is an uncharacterized protein from Saccharomyces cerevisiae (strain ATCC 204508 / S288c) (Baker's yeast).